The primary structure comprises 132 residues: Small ribosomal subunit protein uS8 (132 aa).

This sequence belongs to the universal ribosomal protein uS8 family. As to quaternary structure, part of the 30S ribosomal subunit. Contacts proteins S5 and S12.

One of the primary rRNA binding proteins, it binds directly to 16S rRNA central domain where it helps coordinate assembly of the platform of the 30S subunit. The polypeptide is Small ribosomal subunit protein uS8 (Mycobacterium leprae (strain Br4923)).